The following is a 401-amino-acid chain: Phosrestin-1 (401 aa).

At S366 the chain carries Phosphoserine; by CaMK.

The protein belongs to the arrestin family. Phosphorylated upon light exposure. As to expression, expressed in photoreceptor cells.

It is found in the cell projection. The protein localises to the rhabdomere. In terms of biological role, regulates photoreceptor cell deactivation. Arr1 and Arr2 proteins are mediators of rhodopsin inactivation and are essential for the termination of the phototransduction cascade. Involved in regulating normal cycles of per nuclear accumulation in brain circadian neurons and thus is important for normal circadian behavior. In the dark, functions with Arr1 to promote the formation of cytosolic Bdbt foci, which are required for dco localization to photoreceptor nuclei where it phosphorylates and activates degradation of per. The polypeptide is Phosrestin-1 (Arr2) (Drosophila melanogaster (Fruit fly)).